A 312-amino-acid polypeptide reads, in one-letter code: tRNA uridine(34) hydroxylase (312 aa).

The Rhodanese domain occupies 130–225; the sequence is RGDEVVFFDG…YGEQFGNKGL (96 aa). Cys185 functions as the Cysteine persulfide intermediate in the catalytic mechanism.

It belongs to the TrhO family.

It carries out the reaction uridine(34) in tRNA + AH2 + O2 = 5-hydroxyuridine(34) in tRNA + A + H2O. Its function is as follows. Catalyzes oxygen-dependent 5-hydroxyuridine (ho5U) modification at position 34 in tRNAs. This chain is tRNA uridine(34) hydroxylase, found in Corynebacterium glutamicum (strain R).